The chain runs to 426 residues: Potassium channel subfamily K member 2 (426 aa).

Residues 1–61 lie on the Cytoplasmic side of the membrane; that stretch reads MLASASRERP…SAINVMKWKT (61 aa). Important for GNG4 binding and L-glutamate release in astrocytes stretches follow at residues 17–38 and 51–61; these read AAPD…LSFS and DSAINVMKWKT. A helical transmembrane segment spans residues 62 to 82; sequence VSTIFLVVVLYLIIGATVFKA. Residues Asn-110 and Asn-134 are each glycosylated (N-linked (GlcNAc...) asparagine). Positions 144–170 form an intramembrane region, pore-forming; that stretch reads LGSSFFFAGTVITTIGFGNISPRTEGG. Positions 157, 158, 159, and 160 each coordinate K(+). The segment at 157 to 162 is selectivity filter 1; sequence TIGFGN. A helical membrane pass occupies residues 172 to 192; it reads IFCIIYALLGIPLFGFLLAGV. Over 193–222 the chain is Cytoplasmic; it reads GDQLGTIFGKGIAKVEDTFIKWNVSQTKIR. A helical membrane pass occupies residues 223–243; sequence IISTIIFILFGCVLFVALPAV. An intramembrane region (pore-forming) is located at residues 253–283; sequence ALDAIYFVVITLTTIGFGDYVAGGSDIEYLD. The K(+) site is built by Thr-266, Ile-267, Gly-268, and Phe-269. Residues 266–271 are selectivity filter 2; sequence TIGFGD. A helical membrane pass occupies residues 288–308; it reads VVWFWILVGLAYFAAVLSMIG. Over 309-426 the chain is Cytoplasmic; the sequence is DWLRVISKKT…EDIAVIENMK (118 aa). Positions 313-326 are interaction with AKAP5; it reads VISKKTKEEVGEFR. The segment at 337–385 is essential for chloroform and halothane sensitivity; the sequence is TAEFKETRRRLSVEIYDKFQRATSVKRKLSAELAGNHNQELTPCRRTLS. Ser-348 is subject to Phosphoserine; by PKA.

It belongs to the two pore domain potassium channel (TC 1.A.1.8) family. As to quaternary structure, homodimer; disulfide-linked. Forms heterodimers with other 2-pore domain K(+) channel subunits, such as KCNK1, KCNK4, KCNK10 and KCNK18. Interacts with AKAP5; the channel is recruited to postsynaptic microdomains by AKAP5 where it can integrate neurotransmitter receptor signals. Part of a complex composed of AKAP5 and ADRB2. Upon AKAP5 binding, the channel is no longer sensitive to intracellular acidification, membrane stretch or arachidonic acid stimuli. Interacts with POPDC1; the interaction enhances KCNK2 surface expression and is inhibited by cAMP. Interacts (via N-terminus) with G-protein subunit GNG4 (via C-terminus); this interaction confers ion selectivity to L-glutamate and Cl(-) anions. Post-translationally, phosphorylation at Ser-348 controls the reversible conversion from a leak channel to a voltage-dependent channel. As to expression, expressed in cardiomyocytes (at protein level). Expressed in various brain regions including the lateral olfactory tract, piriform cortex of the forebrain, paraventricular and anteromedial thalamic nuclei, brainstem, caudate putamen, nucleus accumbens, neocortex and interpeduncular nucleus. Detected in astrocytes in hippocampus stratum radiatum. Expressed in brain and kidney.

It localises to the cell membrane. Its subcellular location is the endoplasmic reticulum membrane. The protein resides in the cell projection. It is found in the axon. The protein localises to the dendrite. It localises to the postsynaptic density membrane. Its subcellular location is the sarcolemma. The enzyme catalyses K(+)(in) = K(+)(out). The catalysed reaction is L-glutamate(out) = L-glutamate(in). It carries out the reaction chloride(in) = chloride(out). It catalyses the reaction Rb(+)(in) = Rb(+)(out). The enzyme catalyses Cs(+)(in) = Cs(+)(out). Activated by various stimuli including intracellular acidic pH, mechanical stretch and polyunsaturated fatty acids such as arachidonic acid. Its function is as follows. K(+) channel that conducts voltage-dependent outward rectifying currents upon membrane depolarization. Voltage sensing is coupled to K(+) electrochemical gradient in an 'ion flux gating' mode where outward but not inward ion flow opens the gate. Converts to voltage-independent 'leak' conductance mode upon stimulation by various stimuli including mechanical membrane stretch, acidic pH, heat and lipids. Reversibly converts between a voltage-insensitive K(+) 'leak' channel and a voltage-dependent outward rectifying K(+) channel in a phosphorylation-dependent manner. Homo- and heterodimerizes to form functional channels with distinct regulatory and gating properties. In trigeminal ganglia sensory neurons, the heterodimer of KCNK2/TREK-1 and KCNK18/TRESK inhibits neuronal firing and neurogenic inflammation by stabilizing the resting membrane potential at K(+) equilibrium potential as well as by regulating the threshold of action potentials and the spike frequency. At trigeminal A-beta afferent nerves, the heterodimer of KCNK2/TREK-1 and KCNK4/TRAAK is mostly coexpressed at nodes of Ranvier where it conducts voltage-independent mechanosensitive and thermosensitive currents, allowing rapid action potential repolarization, high speed and high frequence saltatory conduction on myelinated nerves to ensure prompt sensory responses. In hippocampal astrocytes, the heterodimer of KCNK2/TREK-1 and KCNK1/TWIK-1 allows passive K(+) conductance under basal conditions, but changes ion selectivity and becomes permeable to L-glutamate and Cl(-) ions upon binding to G-protein subunit GNG4 in stimulated astrocytes. Mediates rapid L-glutamate release in response to activation of G-protein-coupled receptors such as F2R and CNR1. In hippocampal pyramidal neurons, the homodimer of KCNK2/TREK-1 contributes to gamma-aminobutyric acid (GABA) B-induced slow inhibitory postsynaptic potential. Associates with AKAP5 and Gs-protein-coupled receptor B2AR at postsynaptic dense bodies and converts to a leak channel no longer sensitive to stimulation by arachidonic acid, acidic pH or mechanical stress, nor inhibited by Gq-coupled receptors but still under the negative control of Gs-coupled receptors. Permeable to other monovalent cations such as Rb(+) and Cs(+). Does not display channel activity but reduces the channel activity of isoform 1, isoform 2 and isoform 4 and reduces cell surface expression of isoform 2. The chain is Potassium channel subfamily K member 2 from Rattus norvegicus (Rat).